A 346-amino-acid chain; its full sequence is MIIMDYLKILEDLVKIRTDNRIGVKKAFKYLSNLFNNLGIKNTIIEGCFVAYKEKENFDLILNSHIDTVKIQSNFKKDDNNFYGTGVIDAKGNVVLMIHAFLNSNNSLLVISPDEETESNGIYNFCQYLRNKNKIQRGIKCIVGEPTDLNVCIGHKGRFEYIVESFGEARHASSQGLNPIEILSRVILDLKNLPLEKIKVDKIYSSSITPTIIKGGIQSNIIPDYAYVLFDVRSVEKDIIKKIDDFLSQKNYSKHIKSSLNPERHYANFYMLENKELINKLSKHFKISFFNATCEAYYFNKFLKADTIIYGVGKLELAHSKEEYLNLNDFDRGIKEVEKLAELMIE.

Position 65 (His-65) interacts with Zn(2+). The active site involves Asp-67. Asp-89 is a Zn(2+) binding site. Glu-115 acts as the Proton acceptor in catalysis. Zn(2+) contacts are provided by Glu-116, Glu-145, and His-319.

This sequence belongs to the peptidase M20A family. It depends on Zn(2+) as a cofactor. Co(2+) is required as a cofactor.

This is an uncharacterized protein from Methanocaldococcus jannaschii (strain ATCC 43067 / DSM 2661 / JAL-1 / JCM 10045 / NBRC 100440) (Methanococcus jannaschii).